The primary structure comprises 154 residues: MQAVGATLTAVGAIGAGLLVTAPAAGAATAGATASYNGVCGSGYKVVNSMPIGSTGTVYLTYNSATGKNCTVTIRNTTGTPTYMVAYVRNIESGADQYDEGDYRSYAGPVYVSARGACVEWGGVIGNLQAWNYGSNCGALAAKAPQKDWFAGQR.

Positions 1–33 (MQAVGATLTAVGAIGAGLLVTAPAAGAATAGAT) are cleaved as a signal peptide.

Its subcellular location is the spore wall. In Streptomyces coelicolor (strain ATCC BAA-471 / A3(2) / M145), this protein is Spore-associated protein A.